The chain runs to 406 residues: Tryptophan synthase beta chain (406 aa).

At Lys99 the chain carries N6-(pyridoxal phosphate)lysine.

Belongs to the TrpB family. As to quaternary structure, tetramer of two alpha and two beta chains. Pyridoxal 5'-phosphate serves as cofactor.

It catalyses the reaction (1S,2R)-1-C-(indol-3-yl)glycerol 3-phosphate + L-serine = D-glyceraldehyde 3-phosphate + L-tryptophan + H2O. It participates in amino-acid biosynthesis; L-tryptophan biosynthesis; L-tryptophan from chorismate: step 5/5. Its function is as follows. The beta subunit is responsible for the synthesis of L-tryptophan from indole and L-serine. The chain is Tryptophan synthase beta chain from Rhizobium etli (strain CIAT 652).